The primary structure comprises 293 residues: Ribosomal protein L11 methyltransferase (293 aa).

The S-adenosyl-L-methionine site is built by Thr-145, Gly-166, Asp-188, and Asn-230.

The protein belongs to the methyltransferase superfamily. PrmA family.

The protein resides in the cytoplasm. It carries out the reaction L-lysyl-[protein] + 3 S-adenosyl-L-methionine = N(6),N(6),N(6)-trimethyl-L-lysyl-[protein] + 3 S-adenosyl-L-homocysteine + 3 H(+). Functionally, methylates ribosomal protein L11. The chain is Ribosomal protein L11 methyltransferase from Sodalis glossinidius (strain morsitans).